The primary structure comprises 150 residues: Cytochrome c oxidase subunit 5A, mitochondrial (150 aa).

Residues 1 to 41 constitute a mitochondrion transit peptide; that stretch reads MLGAALRRCAVAAAARAGPRGLLHSAPTPGPAAAIQSVRCY. The SIFI-degron signature appears at 2–17; that stretch reads LGAALRRCAVAAAARA. 2 positions are modified to N6-acetyllysine: Lys87 and Lys113. Thr141 carries the phosphothreonine modification.

It belongs to the cytochrome c oxidase subunit 5A family. Component of the cytochrome c oxidase (complex IV, CIV), a multisubunit enzyme composed of 14 subunits. The complex is composed of a catalytic core of 3 subunits MT-CO1, MT-CO2 and MT-CO3, encoded in the mitochondrial DNA, and 11 supernumerary subunits COX4I, COX5A, COX5B, COX6A, COX6B, COX6C, COX7A, COX7B, COX7C, COX8 and NDUFA4, which are encoded in the nuclear genome. The complex exists as a monomer or a dimer and forms supercomplexes (SCs) in the inner mitochondrial membrane with NADH-ubiquinone oxidoreductase (complex I, CI) and ubiquinol-cytochrome c oxidoreductase (cytochrome b-c1 complex, complex III, CIII), resulting in different assemblies (supercomplex SCI(1)III(2)IV(1) and megacomplex MCI(2)III(2)IV(2)). Interacts with AFG1L. Interacts with RAB5IF. Post-translationally, in response to mitochondrial stress, the precursor protein is ubiquitinated by the SIFI complex in the cytoplasm before mitochondrial import, leading to its degradation. Within the SIFI complex, UBR4 initiates ubiquitin chain that are further elongated or branched by KCMF1.

The protein resides in the mitochondrion inner membrane. It functions in the pathway energy metabolism; oxidative phosphorylation. Component of the cytochrome c oxidase, the last enzyme in the mitochondrial electron transport chain which drives oxidative phosphorylation. The respiratory chain contains 3 multisubunit complexes succinate dehydrogenase (complex II, CII), ubiquinol-cytochrome c oxidoreductase (cytochrome b-c1 complex, complex III, CIII) and cytochrome c oxidase (complex IV, CIV), that cooperate to transfer electrons derived from NADH and succinate to molecular oxygen, creating an electrochemical gradient over the inner membrane that drives transmembrane transport and the ATP synthase. Cytochrome c oxidase is the component of the respiratory chain that catalyzes the reduction of oxygen to water. Electrons originating from reduced cytochrome c in the intermembrane space (IMS) are transferred via the dinuclear copper A center (CU(A)) of subunit 2 and heme A of subunit 1 to the active site in subunit 1, a binuclear center (BNC) formed by heme A3 and copper B (CU(B)). The BNC reduces molecular oxygen to 2 water molecules using 4 electrons from cytochrome c in the IMS and 4 protons from the mitochondrial matrix. In Plecturocebus donacophilus (Bolivian gray titi monkey), this protein is Cytochrome c oxidase subunit 5A, mitochondrial (COX5A).